The following is a 288-amino-acid chain: Protease HtpX homolog (288 aa).

A run of 2 helical transmembrane segments spans residues threonine 6 to glycine 26 and glutamine 28 to serine 48. Zn(2+) is bound at residue histidine 130. Residue glutamate 131 is part of the active site. Histidine 134 is a Zn(2+) binding site. The next 2 membrane-spanning stretches (helical) occupy residues isoleucine 140 to alanine 160 and valine 179 to isoleucine 199. Glutamate 204 is a binding site for Zn(2+).

Belongs to the peptidase M48B family. The cofactor is Zn(2+).

The protein resides in the cell inner membrane. This Campylobacter concisus (strain 13826) protein is Protease HtpX homolog.